A 576-amino-acid chain; its full sequence is FtsZ-localized protein C (576 aa).

In terms of assembly, interacts with FtsZ filaments.

It localises to the cytoplasm. Its subcellular location is the cell inner membrane. Functionally, membrane anchor for FtsZ. Binds and recruits FtsZ polymers to membranes early in the cell cycle. May also improve the efficiency of cytokinesis through the regulation of cell wall hydrolysis. The chain is FtsZ-localized protein C from Caulobacter vibrioides (strain NA1000 / CB15N) (Caulobacter crescentus).